We begin with the raw amino-acid sequence, 504 residues long: Serine O-succinyltransferase (504 aa).

The transit peptide at 1-26 directs the protein to the mitochondrion; the sequence is MLRASSKRLQLSWQVFRRFQSSNPQL. A disordered region spans residues 49-70; it reads QACPNSVDPSASITSPSLSSGP. Positions 57 to 70 are enriched in low complexity; sequence PSASITSPSLSSGP. An AB hydrolase-1 domain is found at 117–395; it reads NAILLHTGLS…SAEEIIKLNE (279 aa). Positions 124–127 are important for substrate specificity; the sequence is GLSA. The active-site Nucleophile is Ser-221. Residue Arg-290 participates in substrate binding. Active-site residues include Asp-443 and His-480. Substrate is bound at residue Asp-481.

This sequence belongs to the AB hydrolase superfamily. MetX family.

The protein localises to the mitochondrion. The catalysed reaction is succinyl-CoA + L-serine = O-succinyl-L-serine + CoA. The protein operates within amino-acid biosynthesis; L-cysteine biosynthesis; L-cysteine from L-serine: step 1/2. In terms of biological role, transfers a succinyl group from succinyl-CoA to L-serine, forming succinyl-L-serine. Also has weak serine acetyl transferase activity and homoserine succinyl transferase activity. In Schizosaccharomyces pombe (strain 972 / ATCC 24843) (Fission yeast), this protein is Serine O-succinyltransferase.